Reading from the N-terminus, the 429-residue chain is Adenylosuccinate synthetase (429 aa).

GTP is bound by residues 12 to 18 and 40 to 42; these read GDEGKGK and GHT. The active-site Proton acceptor is Asp-13. Residues Asp-13 and Gly-40 each coordinate Mg(2+). IMP contacts are provided by residues 13-16, 38-41, Thr-128, Arg-142, Gln-223, Thr-238, and Arg-302; these read DEGK and NAGH. Residue His-41 is the Proton donor of the active site. Residue 298–304 participates in substrate binding; that stretch reads VNTGRPR. GTP is bound by residues Arg-304, 330-332, and 412-414; these read KLD and GVG.

Belongs to the adenylosuccinate synthetase family. Homodimer. The cofactor is Mg(2+).

It is found in the cytoplasm. The catalysed reaction is IMP + L-aspartate + GTP = N(6)-(1,2-dicarboxyethyl)-AMP + GDP + phosphate + 2 H(+). It functions in the pathway purine metabolism; AMP biosynthesis via de novo pathway; AMP from IMP: step 1/2. Functionally, plays an important role in the de novo pathway of purine nucleotide biosynthesis. Catalyzes the first committed step in the biosynthesis of AMP from IMP. This chain is Adenylosuccinate synthetase, found in Corynebacterium urealyticum (strain ATCC 43042 / DSM 7109).